The chain runs to 488 residues: NADH-quinone oxidoreductase subunit N (488 aa).

14 helical membrane-spanning segments follow: residues 15 to 35, 42 to 62, 79 to 99, 108 to 128, 133 to 153, 168 to 188, 209 to 229, 243 to 263, 277 to 297, 305 to 325, 333 to 353, 376 to 396, 409 to 429, and 456 to 476; these read LALPEIWMLVMACVVLVVDLY, GMTFMLTQFTLVVAGVLAIVA, NLAAVLKVAIAGLGFLSFAYC, LLKGEYFVLGLFSLLGMMIMA, LMTVYLGLELLALTLYAMVAF, FVLGAIASGILLYGMSLIYGA, WLLLLGMTLVVVGVAFKFGAV, PTTVALFASTAPKVAAVALFV, WQPMIILLAVASLVVGNLAAL, MLAYSTASHVGFILLGFIAGT, LFYAITYGIMSAGAFGLIILL, MALMMLLLMFSMTGIPGTVGF, VGLVWLAVFAVVFAVIGAFYY, and GLLVANGIAVLLLGIFPDSLI.

It belongs to the complex I subunit 2 family. As to quaternary structure, NDH-1 is composed of 14 different subunits. Subunits NuoA, H, J, K, L, M, N constitute the membrane sector of the complex.

It localises to the cell inner membrane. The enzyme catalyses a quinone + NADH + 5 H(+)(in) = a quinol + NAD(+) + 4 H(+)(out). Functionally, NDH-1 shuttles electrons from NADH, via FMN and iron-sulfur (Fe-S) centers, to quinones in the respiratory chain. The immediate electron acceptor for the enzyme in this species is believed to be ubiquinone. Couples the redox reaction to proton translocation (for every two electrons transferred, four hydrogen ions are translocated across the cytoplasmic membrane), and thus conserves the redox energy in a proton gradient. The protein is NADH-quinone oxidoreductase subunit N of Alkalilimnicola ehrlichii (strain ATCC BAA-1101 / DSM 17681 / MLHE-1).